The sequence spans 110 residues: T cell receptor alpha variable 35 (110 aa).

The first 19 residues, methionine 1 to glycine 19, serve as a signal peptide directing secretion. The 91-residue stretch at glutamine 20 to glutamine 110 folds into the Ig-like domain. Residues asparagine 40 and asparagine 93 are each glycosylated (N-linked (GlcNAc...) asparagine). Residues cysteine 41 and cysteine 107 are joined by a disulfide bond.

Alpha-beta TR is a heterodimer composed of an alpha and beta chain; disulfide-linked. The alpha-beta TR is associated with the transmembrane signaling CD3 coreceptor proteins to form the TR-CD3 (TcR or TCR). The assembly of alpha-beta TR heterodimers with CD3 occurs in the endoplasmic reticulum where a single alpha-beta TR heterodimer associates with one CD3D-CD3E heterodimer, one CD3G-CD3E heterodimer and one CD247 homodimer forming a stable octameric structure. CD3D-CD3E and CD3G-CD3E heterodimers preferentially associate with TR alpha and TR beta chains, respectively. The association of the CD247 homodimer is the last step of TcR assembly in the endoplasmic reticulum and is required for transport to the cell surface.

It localises to the cell membrane. V region of the variable domain of T cell receptor (TR) alpha chain that participates in the antigen recognition. Alpha-beta T cell receptors are antigen specific receptors which are essential to the immune response and are present on the cell surface of T lymphocytes. Recognize peptide-major histocompatibility (MH) (pMH) complexes that are displayed by antigen presenting cells (APC), a prerequisite for efficient T cell adaptive immunity against pathogens. Binding of alpha-beta TR to pMH complex initiates TR-CD3 clustering on the cell surface and intracellular activation of LCK that phosphorylates the ITAM motifs of CD3G, CD3D, CD3E and CD247 enabling the recruitment of ZAP70. In turn ZAP70 phosphorylates LAT, which recruits numerous signaling molecules to form the LAT signalosome. The LAT signalosome propagates signal branching to three major signaling pathways, the calcium, the mitogen-activated protein kinase (MAPK) kinase and the nuclear factor NF-kappa-B (NF-kB) pathways, leading to the mobilization of transcription factors that are critical for gene expression and essential for T cell growth and differentiation. The T cell repertoire is generated in the thymus, by V-(D)-J rearrangement. This repertoire is then shaped by intrathymic selection events to generate a peripheral T cell pool of self-MH restricted, non-autoaggressive T cells. Post-thymic interaction of alpha-beta TR with the pMH complexes shapes TR structural and functional avidity. The chain is T cell receptor alpha variable 35 from Homo sapiens (Human).